The primary structure comprises 576 residues: MAGUK p55 subfamily member 7 (576 aa).

2 consecutive L27 domains span residues 10 to 63 (SDTG…YEKE) and 65 to 122 (PMPV…YDPV). The region spanning 139 to 220 (IIRLVKNREP…AITFKIIPSI (82 aa)) is the PDZ domain. An SH3 domain is found at 228 to 298 (DGKMFVKALF…PSKQFQERRF (71 aa)). One can recognise a Guanylate kinase-like domain in the interval 368 to 560 (YRLVILVGPV…AYNELRSTLE (193 aa)).

It belongs to the MAGUK family.

It is found in the membrane. The protein resides in the cell junction. The protein localises to the tight junction. It localises to the adherens junction. In terms of biological role, acts as an important adapter that promotes epithelial cell polarity and tight junction formation. Involved in the assembly of protein complexes at sites of cell-cell contact. This chain is MAGUK p55 subfamily member 7 (mpp7), found in Xenopus tropicalis (Western clawed frog).